A 359-amino-acid chain; its full sequence is MERRASETPEDGDPEEDTATALQRLVELTTSRVTPVRSLRDQYHLIRKLGSGSYGRVLLAQPHQGGPAVALKLLRRDLVLRSTFLREFCVGRCVSAHPGLLQTLAGPLQTPRYFAFAQEYAPCGDLSGMLQERGLPELLVKRVVAQLAGALDFLHSRGLVHADVKPDNVLVFDPVCSRVALGDLGLTRPEGSPTPAPPVPLPTAPPELCLLLPPDTLPLRPAVDSWGLGVLLFCAATACFPWDVALAPNPEFEAFAGWVTTKPQPPQPPPPWDQFAPPALALLQGLLDLDPETRSPPLAVLDFLGDDWGLQGNREGPGVLGSAVSYEDREEGGSSLEEWTDEGDDSKSGGRTGTDGGAP.

Residues 43–309 (YHLIRKLGSG…VLDFLGDDWG (267 aa)) form the Protein kinase domain. ATP is bound by residues 49-57 (LGSGSYGRV) and Lys-72. Catalysis depends on Asp-163, which acts as the Proton acceptor. The disordered stretch occupies residues 314–359 (REGPGVLGSAVSYEDREEGGSSLEEWTDEGDDSKSGGRTGTDGGAP). The segment covering 350 to 359 (GRTGTDGGAP) has biased composition (gly residues).

It belongs to the protein kinase superfamily. Ser/Thr protein kinase family. STKL subfamily.

The enzyme catalyses L-seryl-[protein] + ATP = O-phospho-L-seryl-[protein] + ADP + H(+). It catalyses the reaction L-threonyl-[protein] + ATP = O-phospho-L-threonyl-[protein] + ADP + H(+). This is an uncharacterized protein from Homo sapiens (Human).